The sequence spans 509 residues: 3-ketoacyl-CoA synthase 11 (509 aa).

The next 2 membrane-spanning stretches (helical) occupy residues 36–56 (LITH…AAQI) and 75–95 (LISV…YFMT). Positions 92–381 (YFMTRPRPVY…FFATLVGRKL (290 aa)) constitute an FAE domain. Catalysis depends on residues cysteine 236, histidine 315, histidine 399, histidine 403, and asparagine 436.

This sequence belongs to the thiolase-like superfamily. Chalcone/stilbene synthases family. Only expressed in guard cells. Expressed in siliques, flowers, leaves, stems, roots and seedlings.

The protein localises to the membrane. It carries out the reaction a very-long-chain acyl-CoA + malonyl-CoA + H(+) = a very-long-chain 3-oxoacyl-CoA + CO2 + CoA. The protein operates within lipid metabolism; fatty acid biosynthesis. Functionally, active on both saturated and mono-unsaturated acyl chains C16 to C20. This Arabidopsis thaliana (Mouse-ear cress) protein is 3-ketoacyl-CoA synthase 11.